The sequence spans 151 residues: Ubiquitin-conjugating enzyme E2 2 (151 aa).

Residues 4–150 (AARRRLMRDF…VRETVEKSWE (147 aa)) form the UBC core domain. Cysteine 88 (glycyl thioester intermediate) is an active-site residue.

This sequence belongs to the ubiquitin-conjugating enzyme family.

It localises to the cytoplasm. The protein resides in the nucleus. The catalysed reaction is S-ubiquitinyl-[E1 ubiquitin-activating enzyme]-L-cysteine + [E2 ubiquitin-conjugating enzyme]-L-cysteine = [E1 ubiquitin-activating enzyme]-L-cysteine + S-ubiquitinyl-[E2 ubiquitin-conjugating enzyme]-L-cysteine.. It functions in the pathway protein modification; protein ubiquitination. Its function is as follows. Catalyzes the covalent attachment of ubiquitin to other proteins. Plays a role in transcription regulation by catalyzing the monoubiquitination of histone H2B to form H2BK123ub1. H2BK123ub1 gives a specific tag for epigenetic transcriptional activation and is also a prerequisite for H3K4me and H3K79me formation. Also involved in postreplication repair of UV-damaged DNA, in N-end rule-dependent protein degradation and in sporulation. The sequence is that of Ubiquitin-conjugating enzyme E2 2 (UBC2) from Fusarium solani (Filamentous fungus).